Here is a 124-residue protein sequence, read N- to C-terminus: Small ribosomal subunit protein uS12 (124 aa).

3-methylthioaspartic acid is present on Asp-89. The segment at Gln-105–Ser-124 is disordered. The span at Lys-108–Gly-118 shows a compositional bias: basic residues.

It belongs to the universal ribosomal protein uS12 family. In terms of assembly, part of the 30S ribosomal subunit. Contacts proteins S8 and S17. May interact with IF1 in the 30S initiation complex.

Its function is as follows. With S4 and S5 plays an important role in translational accuracy. In terms of biological role, interacts with and stabilizes bases of the 16S rRNA that are involved in tRNA selection in the A site and with the mRNA backbone. Located at the interface of the 30S and 50S subunits, it traverses the body of the 30S subunit contacting proteins on the other side and probably holding the rRNA structure together. The combined cluster of proteins S8, S12 and S17 appears to hold together the shoulder and platform of the 30S subunit. In Mycobacterium leprae (strain Br4923), this protein is Small ribosomal subunit protein uS12.